The sequence spans 758 residues: 5-methyltetrahydropteroyltriglutamate--homocysteine methyltransferase (758 aa).

5-methyltetrahydropteroyltri-L-glutamate contacts are provided by residues 17-20 (RELK) and K117. L-homocysteine is bound by residues 434-436 (IGS) and E487. Residues 434–436 (IGS) and E487 each bind L-methionine. 5-methyltetrahydropteroyltri-L-glutamate contacts are provided by residues 518-519 (RC) and W564. Position 602 (D602) interacts with L-homocysteine. L-methionine is bound at residue D602. E608 serves as a coordination point for 5-methyltetrahydropteroyltri-L-glutamate. 3 residues coordinate Zn(2+): H644, C646, and E668. Residue H697 is the Proton donor of the active site. Residue C729 coordinates Zn(2+).

Belongs to the vitamin-B12 independent methionine synthase family. Requires Zn(2+) as cofactor.

The catalysed reaction is 5-methyltetrahydropteroyltri-L-glutamate + L-homocysteine = tetrahydropteroyltri-L-glutamate + L-methionine. The protein operates within amino-acid biosynthesis; L-methionine biosynthesis via de novo pathway; L-methionine from L-homocysteine (MetE route): step 1/1. Its function is as follows. Catalyzes the transfer of a methyl group from 5-methyltetrahydrofolate to homocysteine resulting in methionine formation. The sequence is that of 5-methyltetrahydropteroyltriglutamate--homocysteine methyltransferase from Yersinia pseudotuberculosis serotype I (strain IP32953).